The following is a 76-amino-acid chain: Omega-agatoxin-Aa3a (76 aa).

6 disulfide bridges follow: Cys2-Cys19, Cys9-Cys25, Cys16-Cys52, Cys18-Cys40, Cys27-Cys38, and Cys59-Cys67.

The protein belongs to the neurotoxin 04 (omega-agtx) family. 03 (type II/III omega-agtx) subfamily. As to expression, expressed by the venom gland.

The protein localises to the secreted. Omega-agatoxin are antagonist of voltage-gated calcium channels. They block insect neuromuscular transmission presynaptically. Potent blocker of N- (Cav2.2/CACNA1B) and L-type (Cav1/CACNA1) calcium channels. The sequence is that of Omega-agatoxin-Aa3a from Agelenopsis aperta (North American funnel-web spider).